The primary structure comprises 357 residues: Undecaprenyl-phosphate alpha-N-acetylglucosaminyl 1-phosphate transferase (357 aa).

The next 7 membrane-spanning stretches (helical) occupy residues 40–60 (GAIPLIGGVSLFVGNLCFYLL), 64–84 (QMRLPTLYLFSIFVLLVIGMI), 124–144 (FQLTLGSIGLIITVLATIAAI), 183–203 (WSFALIIAILPYFMMNLGIPF), 209–229 (VFMGDAGSTLIGFTIIWILLL), 238–258 (MNPVTALWIIAIPLIDMIAIM), and 291–311 (FLLITFAAAICATIGILGEIF).

Belongs to the glycosyltransferase 4 family. WecA subfamily. Mg(2+) is required as a cofactor. Requires Mn(2+) as cofactor.

It localises to the cell inner membrane. The enzyme catalyses di-trans,octa-cis-undecaprenyl phosphate + UDP-N-acetyl-alpha-D-glucosamine = N-acetyl-alpha-D-glucosaminyl-di-trans,octa-cis-undecaprenyl diphosphate + UMP. The protein operates within bacterial outer membrane biogenesis; LPS O-antigen biosynthesis. Its function is as follows. Catalyzes the transfer of the GlcNAc-1-phosphate moiety from UDP-GlcNAc onto the carrier lipid undecaprenyl phosphate (C55-P), yielding GlcNAc-pyrophosphoryl-undecaprenyl (GlcNAc-PP-C55). The polypeptide is Undecaprenyl-phosphate alpha-N-acetylglucosaminyl 1-phosphate transferase (Pasteurella multocida (strain Pm70)).